We begin with the raw amino-acid sequence, 98 residues long: Derivative of benzaldehyde biosynthesis cluster protein C (98 aa).

This sequence belongs to the YciI family.

The protein operates within secondary metabolite biosynthesis. Part of the gene cluster that mediates the biosynthesis of the antibiotic 2,4-dihydroxy-3-methyl-6-(2-oxopropyl)benzaldehyde (DHMBA) and its derivatives. The direct non-reducing polyketide synthase dbaI product is 2,4-dihydroxy-3-methyl-6-(2-oxopropyl)benzaldehyde (DHMBA), produced by condensation of one acetyl-CoA starter unit with 4 malonyl-CoA units and one methylation step. The FAD-dependent monooxygenase dbaH is responsible for the synthesis of yellow pigments derived from the oxidation of DHMBA. The roles of dbaB, C, E and F have still to be determined. The sequence is that of Derivative of benzaldehyde biosynthesis cluster protein C from Emericella nidulans (strain FGSC A4 / ATCC 38163 / CBS 112.46 / NRRL 194 / M139) (Aspergillus nidulans).